A 380-amino-acid chain; its full sequence is Putative glutamate--cysteine ligase 2-1 (380 aa).

Belongs to the glutamate--cysteine ligase type 2 family. YbdK subfamily.

It carries out the reaction L-cysteine + L-glutamate + ATP = gamma-L-glutamyl-L-cysteine + ADP + phosphate + H(+). Functionally, ATP-dependent carboxylate-amine ligase which exhibits weak glutamate--cysteine ligase activity. The sequence is that of Putative glutamate--cysteine ligase 2-1 from Mycolicibacterium vanbaalenii (strain DSM 7251 / JCM 13017 / BCRC 16820 / KCTC 9966 / NRRL B-24157 / PYR-1) (Mycobacterium vanbaalenii).